The following is a 512-amino-acid chain: Cercosporin MFS transporter CTB4 (512 aa).

The next 12 helical transmembrane spans lie at 72 to 92, 110 to 130, 142 to 162, 170 to 190, 202 to 222, 230 to 250, 306 to 326, 343 to 363, 383 to 403, 407 to 427, 456 to 476, and 480 to 500; these read WVIT…SSVF, VVLG…IFWG, LLAG…ARSL, FLGG…LADI, TVGA…SVLV, WIAN…FPFL, ILLM…NFFL, ASLP…LLSF, LLLM…FAWT, TMNP…IHLI, LFAA…GVKW, and ILAL…YFGA.

It belongs to the major facilitator superfamily. CAR1 family.

The protein resides in the cell membrane. Functionally, MFS transporter; part of the gene cluster that mediates the biosynthesis of cercosporin, a light-activated, non-host-selective toxin. The perylenequinone chromophore of cercosporin absorbs light energy to attain an electronically-activated triplet state and produces active oxygen species such as the hydroxyl radical, superoxide, hydrogen peroxide or singlet oxygen upon reaction with oxygen molecules. These reactive oxygen species cause damage to various cellular components including lipids, proteins and nucleic acids. Responsible for secretion and accumulation of cercosporin, but does not play any roles in self-protection against the toxicity of cercosporin. The sequence is that of Cercosporin MFS transporter CTB4 from Cercospora nicotianae (Barn spot disease fungus).